The sequence spans 218 residues: Peptide methionine sulfoxide reductase MsrA (218 aa).

The active site involves C57.

Belongs to the MsrA Met sulfoxide reductase family.

The enzyme catalyses L-methionyl-[protein] + [thioredoxin]-disulfide + H2O = L-methionyl-(S)-S-oxide-[protein] + [thioredoxin]-dithiol. It carries out the reaction [thioredoxin]-disulfide + L-methionine + H2O = L-methionine (S)-S-oxide + [thioredoxin]-dithiol. Has an important function as a repair enzyme for proteins that have been inactivated by oxidation. Catalyzes the reversible oxidation-reduction of methionine sulfoxide in proteins to methionine. The sequence is that of Peptide methionine sulfoxide reductase MsrA from Brucella anthropi (Ochrobactrum anthropi).